The chain runs to 351 residues: MRKIIHIDMDCFFAAVEMRDNPALRDIPIAIGGSRERRGAISTANYPARQFGVRSAMPTAMALKLCPHLTLLPGRFDAYKEASRHVRDIFSRYTSLIEPLSLDEAWLDVTDSPHCYGSATLIAREIRQTIFNELQLTASAGVAPVKFLAKIASDLNKPNGQYVITPADVPGFLKTLPLAKIPGVGKVSAAKLENMGLRTCGDIQQCDLAMLLKRFGKFGRVLWERSQGIDERDVNSERLRKSVGVERTLAEDIHEWSDCEAIIEHLYPELERRLAIVKPDLLIARQGVKLKFNDFQQTTQEHVWPQLNKEDLITTARKTWDERRGERGVRLVGLHVTLLDPQLERQLVLGL.

Positions 4–185 (IIHIDMDCFF…LPLAKIPGVG (182 aa)) constitute a UmuC domain. Residues Asp8 and Asp103 each contribute to the Mg(2+) site. Glu104 is a catalytic residue.

The protein belongs to the DNA polymerase type-Y family. In terms of assembly, monomer. Mg(2+) serves as cofactor.

It localises to the cytoplasm. The enzyme catalyses DNA(n) + a 2'-deoxyribonucleoside 5'-triphosphate = DNA(n+1) + diphosphate. Its function is as follows. Poorly processive, error-prone DNA polymerase involved in untargeted mutagenesis. Copies undamaged DNA at stalled replication forks, which arise in vivo from mismatched or misaligned primer ends. These misaligned primers can be extended by PolIV. Exhibits no 3'-5' exonuclease (proofreading) activity. May be involved in translesional synthesis, in conjunction with the beta clamp from PolIII. The protein is DNA polymerase IV of Salmonella paratyphi A (strain ATCC 9150 / SARB42).